A 511-amino-acid chain; its full sequence is Maturase K (511 aa).

It belongs to the intron maturase 2 family. MatK subfamily.

Its subcellular location is the plastid. The protein resides in the chloroplast. Its function is as follows. Usually encoded in the trnK tRNA gene intron. Probably assists in splicing its own and other chloroplast group II introns. The sequence is that of Maturase K from Primula veris (Cowslip).